The following is a 294-amino-acid chain: 4-hydroxy-tetrahydrodipicolinate synthase (294 aa).

Threonine 45 provides a ligand contact to pyruvate. Catalysis depends on tyrosine 133, which acts as the Proton donor/acceptor. The active-site Schiff-base intermediate with substrate is the lysine 161. Isoleucine 203 provides a ligand contact to pyruvate.

The protein belongs to the DapA family. As to quaternary structure, homotetramer; dimer of dimers.

It is found in the cytoplasm. It carries out the reaction L-aspartate 4-semialdehyde + pyruvate = (2S,4S)-4-hydroxy-2,3,4,5-tetrahydrodipicolinate + H2O + H(+). Its pathway is amino-acid biosynthesis; L-lysine biosynthesis via DAP pathway; (S)-tetrahydrodipicolinate from L-aspartate: step 3/4. In terms of biological role, catalyzes the condensation of (S)-aspartate-beta-semialdehyde [(S)-ASA] and pyruvate to 4-hydroxy-tetrahydrodipicolinate (HTPA). This chain is 4-hydroxy-tetrahydrodipicolinate synthase, found in Shewanella sp. (strain ANA-3).